A 354-amino-acid polypeptide reads, in one-letter code: Holliday junction branch migration complex subunit RuvB (354 aa).

Positions 4 to 190 (TDKLAAERII…FGIVARLEFY (187 aa)) are large ATPase domain (RuvB-L). ATP contacts are provided by residues L29, R30, G71, K74, T75, T76, 137-139 (EDY), R180, Y190, and R227. T75 serves as a coordination point for Mg(2+). Residues 191-261 (DADQLARIVR…VADAALAMLD (71 aa)) are small ATPAse domain (RuvB-S). The tract at residues 264–354 (PVGFDLMDRK…RGMWDTPAGK (91 aa)) is head domain (RuvB-H). DNA-binding residues include R300, R319, and R324.

Belongs to the RuvB family. Homohexamer. Forms an RuvA(8)-RuvB(12)-Holliday junction (HJ) complex. HJ DNA is sandwiched between 2 RuvA tetramers; dsDNA enters through RuvA and exits via RuvB. An RuvB hexamer assembles on each DNA strand where it exits the tetramer. Each RuvB hexamer is contacted by two RuvA subunits (via domain III) on 2 adjacent RuvB subunits; this complex drives branch migration. In the full resolvosome a probable DNA-RuvA(4)-RuvB(12)-RuvC(2) complex forms which resolves the HJ.

The protein localises to the cytoplasm. The enzyme catalyses ATP + H2O = ADP + phosphate + H(+). In terms of biological role, the RuvA-RuvB-RuvC complex processes Holliday junction (HJ) DNA during genetic recombination and DNA repair, while the RuvA-RuvB complex plays an important role in the rescue of blocked DNA replication forks via replication fork reversal (RFR). RuvA specifically binds to HJ cruciform DNA, conferring on it an open structure. The RuvB hexamer acts as an ATP-dependent pump, pulling dsDNA into and through the RuvAB complex. RuvB forms 2 homohexamers on either side of HJ DNA bound by 1 or 2 RuvA tetramers; 4 subunits per hexamer contact DNA at a time. Coordinated motions by a converter formed by DNA-disengaged RuvB subunits stimulates ATP hydrolysis and nucleotide exchange. Immobilization of the converter enables RuvB to convert the ATP-contained energy into a lever motion, pulling 2 nucleotides of DNA out of the RuvA tetramer per ATP hydrolyzed, thus driving DNA branch migration. The RuvB motors rotate together with the DNA substrate, which together with the progressing nucleotide cycle form the mechanistic basis for DNA recombination by continuous HJ branch migration. Branch migration allows RuvC to scan DNA until it finds its consensus sequence, where it cleaves and resolves cruciform DNA. The sequence is that of Holliday junction branch migration complex subunit RuvB from Burkholderia ambifaria (strain MC40-6).